We begin with the raw amino-acid sequence, 1669 residues long: Collagen alpha-1(IV) chain (1669 aa).

The N-terminal stretch at 1 to 27 (MGPRLGVWLLLLLAALLLHEESSRAAA) is a signal peptide. Residues 28–172 (KGGCAGSGCG…LGHIPGTLLK (145 aa)) constitute a propeptide, N-terminal propeptide (7S domain). Residues 50–1445 (ERGLPGLQGV…PPGTPSVDHG (1396 aa)) are disordered. The tract at residues 173 to 1440 (GERGYPGQPG…PGSMGPPGTP (1268 aa)) is triple-helical region. Over residues 196-214 (VGPPGFTGPPGPPGPPGPP) the composition is skewed to pro residues. Proline 204, proline 207, and proline 210 each carry 3-hydroxyproline. Basic and acidic residues-rich tracts occupy residues 254-263 (TAMRGEKGQK) and 289-298 (PGKDGEKGEK). Residues 347–356 (GYPGGPGAKG) show a composition bias toward gly residues. The segment covering 357–366 (ETGPKGFPGI) has biased composition (low complexity). Pro residues predominate over residues 367-376 (PGQPGPPGFP). A compositionally biased stretch (low complexity) spans 396–412 (PGLPGVSLPGPSGRDGL). 2 stretches are compositionally biased toward pro residues: residues 413 to 424 (PGPPGPPGPPGQ) and 436 to 448 (PGPP…PGIP). A compositionally biased stretch (low complexity) spans 485 to 494 (PGEIGFPGQP). Composition is skewed to basic and acidic residues over residues 497–508 (KGDRGLPGRDGL) and 535–545 (FDIRLKGDKGD). Over residues 586 to 595 (GPPGGVGFPG) the composition is skewed to gly residues. A 3-hydroxyproline mark is found at proline 587 and proline 602. Position 603 is a 4-hydroxyproline (proline 603). 3-hydroxyproline is present on proline 605. 4-hydroxyproline occurs at positions 606, 623, 626, 629, and 632. Proline 647 bears the 3-hydroxyproline mark. 2 stretches are compositionally biased toward gly residues: residues 758-767 (GNVGGPGIPG) and 797-817 (GVPG…GPPG). A compositionally biased stretch (low complexity) spans 847 to 871 (SQGLPGLTGQSGLPGLPGQQGTPGQ). Positions 937 to 955 (SMDKVDMGSMKGEKGDQGE) are enriched in basic and acidic residues. Over residues 1011 to 1020 (GSAGGMGLPG) the composition is skewed to gly residues. Low complexity-rich tracts occupy residues 1030 to 1040 (IPGPQGIPGLP), 1101 to 1114 (SPGS…PGLP), and 1193 to 1212 (FPGL…QGFM). Position 1214 is a 3-hydroxyproline (proline 1214). Residues 1247-1258 (PGRPGPMGPPGL) show a composition bias toward pro residues. The span at 1290–1299 (GMPGIGGSPG) shows a compositional bias: gly residues. A compositionally biased stretch (pro residues) spans 1413-1428 (FGPPGPRGFPGPPGPD). Proline 1424 bears the 3-hydroxyproline mark. The 225-residue stretch at 1445-1669 (GFLVTRHSQT…SRCQVCMRRT (225 aa)) folds into the Collagen IV NC1 domain. Cystine bridges form between cysteine 1460-cysteine 1551, cysteine 1493-cysteine 1548, cysteine 1505-cysteine 1511, cysteine 1570-cysteine 1665, cysteine 1604-cysteine 1662, and cysteine 1616-cysteine 1622. Methionine 1533 is covalently cross-linked (S-Lysyl-methionine sulfilimine (Met-Lys) (interchain with K-1651)). An S-Lysyl-methionine sulfilimine (Lys-Met) (interchain with M-1533) cross-link involves residue lysine 1651.

The protein belongs to the type IV collagen family. As to quaternary structure, there are six type IV collagen isoforms, alpha 1(IV)-alpha 6(IV), each of which can form a triple helix structure with 2 other chains to generate type IV collagen network. Interacts with EFEMP2. Post-translationally, lysines at the third position of the tripeptide repeating unit (G-X-Y) are hydroxylated in all cases. The modified lysines can be O-glycosylated. Contains 4-hydroxyproline. Prolines at the third position of the tripeptide repeating unit (G-X-Y) are hydroxylated in some or all of the chains. In terms of processing, contains 3-hydroxyproline. This modification occurs on the first proline residue in the sequence motif Gly-Pro-Hyp, where Hyp is 4-hydroxyproline. Post-translationally, type IV collagens contain numerous cysteine residues which are involved in inter- and intramolecular disulfide bonding. 12 of these, located in the NC1 domain, are conserved in all known type IV collagens. The trimeric structure of the NC1 domains is stabilized by covalent bonds (sulfilimine cross-links) between Lys and Met residues. These cross-links are important for the mechanical stability of the basement membrane. Sulfilimine cross-link is catalyzed by PXDN. In terms of processing, proteolytic processing produces the C-terminal NC1 peptide, arresten.

The protein resides in the secreted. It localises to the extracellular space. The protein localises to the extracellular matrix. Its subcellular location is the basement membrane. Its function is as follows. Type IV collagen is the major structural component of glomerular basement membranes (GBM), forming a 'chicken-wire' meshwork together with laminins, proteoglycans and entactin/nidogen. Arresten, comprising the C-terminal NC1 domain, inhibits angiogenesis and tumor formation. The C-terminal half is found to possess the anti-angiogenic activity. Specifically inhibits endothelial cell proliferation, migration and tube formation. This is Collagen alpha-1(IV) chain from Bos taurus (Bovine).